Reading from the N-terminus, the 271-residue chain is Dermonecrotic toxin LhSicTox-alphaIA2bv (271 aa).

Histidine 3 is a catalytic residue. Residues glutamate 23 and aspartate 25 each contribute to the Mg(2+) site. 2 disulfide bridges follow: cysteine 43–cysteine 49 and cysteine 45–cysteine 188. Aspartate 83 is a Mg(2+) binding site.

Belongs to the arthropod phospholipase D family. Class II subfamily. It depends on Mg(2+) as a cofactor. As to expression, expressed by the venom gland.

It localises to the secreted. The enzyme catalyses an N-(acyl)-sphingosylphosphocholine = an N-(acyl)-sphingosyl-1,3-cyclic phosphate + choline. It carries out the reaction an N-(acyl)-sphingosylphosphoethanolamine = an N-(acyl)-sphingosyl-1,3-cyclic phosphate + ethanolamine. The catalysed reaction is a 1-acyl-sn-glycero-3-phosphocholine = a 1-acyl-sn-glycero-2,3-cyclic phosphate + choline. It catalyses the reaction a 1-acyl-sn-glycero-3-phosphoethanolamine = a 1-acyl-sn-glycero-2,3-cyclic phosphate + ethanolamine. In terms of biological role, dermonecrotic toxins cleave the phosphodiester linkage between the phosphate and headgroup of certain phospholipids (sphingolipid and lysolipid substrates), forming an alcohol (often choline) and a cyclic phosphate. This toxin acts on sphingomyelin (SM). It may also act on ceramide phosphoethanolamine (CPE), lysophosphatidylcholine (LPC) and lysophosphatidylethanolamine (LPE), but not on lysophosphatidylserine (LPS), and lysophosphatidylglycerol (LPG). It acts by transphosphatidylation, releasing exclusively cyclic phosphate products as second products. Induces dermonecrosis, hemolysis, increased vascular permeability, edema, inflammatory response, and platelet aggregation. The sequence is that of Dermonecrotic toxin LhSicTox-alphaIA2bv from Loxosceles hirsuta (Recluse spider).